The chain runs to 225 residues: Protein LiaH (225 aa).

Coiled-coil stretches lie at residues 58 to 151 (KKYE…KEHM) and 161 to 182 (ESAY…IRAN).

The protein belongs to the PspA/Vipp/IM30 family.

The sequence is that of Protein LiaH (liaH) from Bacillus subtilis (strain 168).